A 355-amino-acid chain; its full sequence is Myosin-binding protein H-like (355 aa).

Composition is skewed to polar residues over residues 1–16 (META…SQRQ) and 31–41 (TSHQQEAGSPS). The segment at 1-41 (METATTLEIASCSQRQVEAAADPADAKGPRTSHQQEAGSPS) is disordered. Serine 39 is modified (phosphoserine). Positions 46–140 (PSIEEHPKIW…GGLQATATIN (95 aa)) constitute an Ig-like C2-type 1 domain. The region spanning 149 to 244 (PPQSIKLVDV…TADLAHIQKA (96 aa)) is the Fibronectin type-III domain. Residues 262–346 (PKFTQPLADC…INALGEASVD (85 aa)) form the Ig-like C2-type 2 domain. Cysteine 283 and cysteine 334 form a disulfide bridge. Omega-N-methylarginine is present on arginine 322.

It belongs to the immunoglobulin superfamily. MyBP family. In terms of tissue distribution, expressed in the atria as well as in discrete puncta throughout the right ventricular wall and septum.

Its subcellular location is the cytoplasm. The protein resides in the myofibril. The protein localises to the sarcomere. Functionally, myosin-binding protein which plays a role in cardiac function. Seems to regulate conduction in the atria and ventricular conduction systems. In Mus musculus (Mouse), this protein is Myosin-binding protein H-like.